A 975-amino-acid polypeptide reads, in one-letter code: Translation initiation factor IF-2 (975 aa).

Disordered regions lie at residues 49-110 (KLSG…APKA) and 193-339 (AAAP…GRGA). The span at 63-72 (KKTAARKAAP) shows a compositional bias: basic residues. 3 stretches are compositionally biased toward low complexity: residues 73 to 94 (KKAAVAAPVPEADASSAAAKTP), 193 to 202 (AAAPEAPAPQ), and 209 to 225 (VVGTSGVSSSATPASAP). The segment covering 308–318 (GADRGGRDFDK) has biased composition (basic and acidic residues). The span at 324-336 (GPSAPAAGPAAAG) shows a compositional bias: low complexity. In terms of domain architecture, tr-type G spans 469-639 (TRPPVVTVMG…KLVAEVAELK (171 aa)). Positions 478–485 (GHVDHGKT) are G1. 478 to 485 (GHVDHGKT) is a binding site for GTP. Residues 503 to 507 (GITQH) form a G2 region. A G3 region spans residues 525–528 (DTPG). GTP-binding positions include 525–529 (DTPGH) and 579–582 (NKID). The tract at residues 579 to 582 (NKID) is G4. Positions 615-617 (SAL) are G5.

The protein belongs to the TRAFAC class translation factor GTPase superfamily. Classic translation factor GTPase family. IF-2 subfamily.

Its subcellular location is the cytoplasm. In terms of biological role, one of the essential components for the initiation of protein synthesis. Protects formylmethionyl-tRNA from spontaneous hydrolysis and promotes its binding to the 30S ribosomal subunits. Also involved in the hydrolysis of GTP during the formation of the 70S ribosomal complex. The sequence is that of Translation initiation factor IF-2 from Bdellovibrio bacteriovorus (strain ATCC 15356 / DSM 50701 / NCIMB 9529 / HD100).